Consider the following 30-residue polypeptide: Kappa-sparatoxin-Hv1d (30 aa).

Disulfide bonds link C3–C17, C10–C22, and C16–C26.

In terms of tissue distribution, expressed by the venom gland.

The protein localises to the secreted. Inhibitor of voltage-gated potassium channels of the Kv4/KCND family. Blocks calcium channels (Cav). This is Kappa-sparatoxin-Hv1d from Heteropoda venatoria (Brown huntsman spider).